Reading from the N-terminus, the 509-residue chain is Autophagy-related protein 16 (509 aa).

WD repeat units follow at residues 223–262 (AHEG…LIKS), 265–304 (GSLG…VRHT), 307–347 (GHTD…CTNT), 349–388 (LFTS…LLSE), 391–430 (GHSS…ICGT), 437–478 (RLAS…SILK), and 480–509 (QTSP…CTWT).

It belongs to the WD repeat ATG16 family.

May play a role in autophagy. The sequence is that of Autophagy-related protein 16 from Arabidopsis thaliana (Mouse-ear cress).